Reading from the N-terminus, the 665-residue chain is DNA ligase (665 aa).

Residues 31–35 (DKEFD), 80–81 (SL), and Glu110 each bind NAD(+). Catalysis depends on Lys112, which acts as the N6-AMP-lysine intermediate. The NAD(+) site is built by Arg133, Glu170, Lys285, and Lys309. The Zn(2+) site is built by Cys403, Cys406, Cys421, and Cys427. A BRCT domain is found at 587–665 (GHTDKLAGQS…NEEEFLKLIS (79 aa)).

This sequence belongs to the NAD-dependent DNA ligase family. LigA subfamily. Requires Mg(2+) as cofactor. Mn(2+) serves as cofactor.

It catalyses the reaction NAD(+) + (deoxyribonucleotide)n-3'-hydroxyl + 5'-phospho-(deoxyribonucleotide)m = (deoxyribonucleotide)n+m + AMP + beta-nicotinamide D-nucleotide.. Functionally, DNA ligase that catalyzes the formation of phosphodiester linkages between 5'-phosphoryl and 3'-hydroxyl groups in double-stranded DNA using NAD as a coenzyme and as the energy source for the reaction. It is essential for DNA replication and repair of damaged DNA. In Bacteroides fragilis (strain ATCC 25285 / DSM 2151 / CCUG 4856 / JCM 11019 / LMG 10263 / NCTC 9343 / Onslow / VPI 2553 / EN-2), this protein is DNA ligase.